Consider the following 89-residue polypeptide: Small ribosomal subunit protein uS15 (89 aa).

It belongs to the universal ribosomal protein uS15 family. In terms of assembly, part of the 30S ribosomal subunit. Forms a bridge to the 50S subunit in the 70S ribosome, contacting the 23S rRNA.

In terms of biological role, one of the primary rRNA binding proteins, it binds directly to 16S rRNA where it helps nucleate assembly of the platform of the 30S subunit by binding and bridging several RNA helices of the 16S rRNA. Functionally, forms an intersubunit bridge (bridge B4) with the 23S rRNA of the 50S subunit in the ribosome. The chain is Small ribosomal subunit protein uS15 from Pseudomonas aeruginosa (strain LESB58).